The following is a 719-amino-acid chain: DNA ligase (719 aa).

NAD(+) contacts are provided by residues 42 to 46 (DAEYD), 91 to 92 (SL), and Glu-125. Catalysis depends on Lys-127, which acts as the N6-AMP-lysine intermediate. The NAD(+) site is built by Arg-148, Glu-184, Lys-300, and Lys-324. The Zn(2+) site is built by Cys-429, Cys-432, Cys-447, and Cys-453. Residues 638 to 719 (TASSPIAGKT…WLQLIEGSYI (82 aa)) form the BRCT domain.

Belongs to the NAD-dependent DNA ligase family. LigA subfamily. It depends on Mg(2+) as a cofactor. The cofactor is Mn(2+).

It carries out the reaction NAD(+) + (deoxyribonucleotide)n-3'-hydroxyl + 5'-phospho-(deoxyribonucleotide)m = (deoxyribonucleotide)n+m + AMP + beta-nicotinamide D-nucleotide.. Functionally, DNA ligase that catalyzes the formation of phosphodiester linkages between 5'-phosphoryl and 3'-hydroxyl groups in double-stranded DNA using NAD as a coenzyme and as the energy source for the reaction. It is essential for DNA replication and repair of damaged DNA. The protein is DNA ligase of Bartonella quintana (strain Toulouse) (Rochalimaea quintana).